Consider the following 355-residue polypeptide: MSANDRPATGQPTATYESAFLKACRREPVPHTPVWFMRQAGRSLPEYLKVREGIPMLESCMRPELVAEITLQPVRRHNVDAAIYFSDIVVPLKAIGIDLDIKPGVGPVVEKPIRTRADLAQLRDLTPEDVSYVTEAIKLLTAELGETPLIGFAGAPFTLASYLVEGGPSKNHEHTKALMYGDPQLWADLLDRLAEITSAFLKVQIEAGASAVQLFDSWVGALAPADYRRSVMPASTKVFQAVESYGVPRIHFGVGTGELLGLMGEAGADVVGVDWRVPLDEAARRVGTGKALQGNLDPAVLFSTTEAVETKTREVLDAAAGLEGHVFNLGHGVPPTTDPDALTRLVEYVHTQTAR.

Substrate-binding positions include 38–42 (RQAGR), D87, Y162, S217, and H331.

This sequence belongs to the uroporphyrinogen decarboxylase family. In terms of assembly, homodimer.

It is found in the cytoplasm. It catalyses the reaction uroporphyrinogen III + 4 H(+) = coproporphyrinogen III + 4 CO2. It participates in porphyrin-containing compound metabolism; protoporphyrin-IX biosynthesis; coproporphyrinogen-III from 5-aminolevulinate: step 4/4. Catalyzes the decarboxylation of four acetate groups of uroporphyrinogen-III to yield coproporphyrinogen-III. This Streptomyces avermitilis (strain ATCC 31267 / DSM 46492 / JCM 5070 / NBRC 14893 / NCIMB 12804 / NRRL 8165 / MA-4680) protein is Uroporphyrinogen decarboxylase.